The chain runs to 35 residues: 30 kDa neutral phosphatase (35 aa).

The span at 1–28 (KSSAEVQQTQQASIPASQKANLGNQNNI) shows a compositional bias: polar residues. The interval 1–35 (KSSAEVQQTQQASIPASQKANLGNQNNIMXVAXYQ) is disordered.

In terms of biological role, highly cationic enzyme that can bind human or rat immunoglobulins as well as serum albumin, and could therefore be involved in post-infectious sequelae. The chain is 30 kDa neutral phosphatase from Staphylococcus aureus.